Consider the following 191-residue polypeptide: Signal peptidase IB (191 aa).

Topologically, residues Met1 to Glu7 are cytoplasmic. Residues Trp8–Thr28 traverse the membrane as a helical segment. Over Pro29–Asn191 the chain is Extracellular. Residues Ser36 and Lys77 contribute to the active site.

Belongs to the peptidase S26 family.

The protein localises to the cell membrane. The catalysed reaction is Cleavage of hydrophobic, N-terminal signal or leader sequences from secreted and periplasmic proteins.. In terms of biological role, essential for cell viability. The chain is Signal peptidase IB (spsB) from Staphylococcus aureus (strain Mu50 / ATCC 700699).